We begin with the raw amino-acid sequence, 503 residues long: MDFSIKGCDWSKGEAKGFLTGKSDCIVLGIFEAQTLSGAALDIDTATKGLISRVVKAGDMDGKRGKTLFLPEVSGIGASRVLLVGLGKQDAFNQKAYNDAATAAWRALLATKVVQVTFSLAQLPVDERSSDWGVRAAILALRNETYRFTQMKSKPEPASHTLKRVVFSVDPADEKAAKVAIKQAVALANGMDLTRDLGNLPGNVCTPTYLGNTAKKIAKDWGLKAEVLGLKQIQALKMGSFLSVARASVEPPQFIVLHYQGAAAKAAPVVLVGKGITFDTGGISLKPGEGMDEMKYDMCGAGSVLGTIRAVAEMGLKINVVAIVPTCENMPGGNATKPGDIVTSMKGLTIEVLNTDAEGRLILCDALTYAERFKPAAVIDVATLTGACVIALGGHNSGLFSTNDALAGELLDASREANDPAWRMPLDDEYQDQLKSNFADLANIGGRPAGAVTAACFLSRFTESYPWAHLDIAGTAWKGGAAKGATGRPVPLLAQFLIDRAGQ.

Positions 274 and 279 each coordinate Mn(2+). Lys-286 is an active-site residue. Residues Asp-297, Asp-356, and Glu-358 each contribute to the Mn(2+) site. Residue Arg-360 is part of the active site.

Belongs to the peptidase M17 family. It depends on Mn(2+) as a cofactor.

The protein resides in the cytoplasm. The enzyme catalyses Release of an N-terminal amino acid, Xaa-|-Yaa-, in which Xaa is preferably Leu, but may be other amino acids including Pro although not Arg or Lys, and Yaa may be Pro. Amino acid amides and methyl esters are also readily hydrolyzed, but rates on arylamides are exceedingly low.. It catalyses the reaction Release of an N-terminal amino acid, preferentially leucine, but not glutamic or aspartic acids.. Its function is as follows. Presumably involved in the processing and regular turnover of intracellular proteins. Catalyzes the removal of unsubstituted N-terminal amino acids from various peptides. The protein is Probable cytosol aminopeptidase of Burkholderia orbicola (strain MC0-3).